Reading from the N-terminus, the 129-residue chain is Large ribosomal subunit protein bL12 (129 aa).

Belongs to the bacterial ribosomal protein bL12 family. In terms of assembly, homodimer. Part of the ribosomal stalk of the 50S ribosomal subunit. Forms a multimeric L10(L12)X complex, where L10 forms an elongated spine to which 2 to 4 L12 dimers bind in a sequential fashion. Binds GTP-bound translation factors.

In terms of biological role, forms part of the ribosomal stalk which helps the ribosome interact with GTP-bound translation factors. Is thus essential for accurate translation. This chain is Large ribosomal subunit protein bL12, found in Treponema denticola (strain ATCC 35405 / DSM 14222 / CIP 103919 / JCM 8153 / KCTC 15104).